We begin with the raw amino-acid sequence, 250 residues long: Kv channel-interacting protein 4 (250 aa).

The tract at residues 2–44 is KIS; that stretch reads NVRRVESISAQLEEASSTGGFLYAQNSTKRSIKERLMKLLPCS. A phosphoserine mark is found at S17 and S56. Residues 61 to 117 form the EF-hand 1; degenerate domain; it reads LEMATVRHRPEALELLEAQSKFTKKELQILYRGFKNECPSGVVNEETFKEIYSQFFP. EF-hand domains lie at 120 to 155, 156 to 191, and 204 to 239; these read DSTTYAHFLFNAFDTDHNGAVSFEDFIKGLSILLRG, TVQEKLNWAFNLYDINKDGYITKEEMLDIMKAIYDM, and APRQHVETFFQKMDKNKDGVVTIDEFIESCQKDENI. Residues D133, D135, N137, D144, D169, N171, D173, Y175, E180, D217, N219, D221, and E228 each coordinate Ca(2+). The segment at 237–250 is interaction with KCND2; that stretch reads ENIMRSMQLFENVI.

This sequence belongs to the recoverin family. As to quaternary structure, component of heteromultimeric potassium channels. Identified in potassium channel complexes containing KCND1, KCND2, KCND3, KCNIP1, KCNIP2, KCNIP3, KCNIP4, DPP6 and DPP10. Interacts with KCND2. Interacts with KCND3. Interacts with the C-terminus of PSEN2 and probably PSEN1.

The protein localises to the cell membrane. It is found in the cytoplasm. Its subcellular location is the peroxisome. Regulatory subunit of Kv4/D (Shal)-type voltage-gated rapidly inactivating A-type potassium channels. Modulates KCND2 channel density, inactivation kinetics and rate of recovery from inactivation in a calcium-dependent and isoform-specific manner. Modulates KCND3/Kv4.3 currents. Isoform 4 does not increase KCND2 expression at the cell membrane. Isoform 4 retains KCND3 in the endoplasmic reticulum and negatively regulates its expression at the cell membrane. The sequence is that of Kv channel-interacting protein 4 (KCNIP4) from Macaca fascicularis (Crab-eating macaque).